Reading from the N-terminus, the 235-residue chain is V-type proton ATPase subunit E2 (235 aa).

N-acetylmethionine is present on methionine 1. Positions 8–64 (KQIQQMVRFIRQEAEEKANEISISAEEEFNIERLQLLESAKRKLRQDYDRKLKQVDI) form a coiled coil.

It belongs to the V-ATPase E subunit family. In terms of assembly, V-ATPase is a heteromultimeric enzyme composed of a peripheral catalytic V1 complex (components A to H) attached to an integral membrane V0 proton pore complex (components: a, c, c'', d and e).

It is found in the vacuole membrane. Its function is as follows. Subunit of the peripheral V1 complex of vacuolar ATPase essential for assembly or catalytic function. V-ATPase is responsible for acidifying a variety of intracellular compartments in eukaryotic cells. The sequence is that of V-type proton ATPase subunit E2 (VHA-E2) from Arabidopsis thaliana (Mouse-ear cress).